We begin with the raw amino-acid sequence, 337 residues long: m7GpppX diphosphatase (337 aa).

Residues 1-37 (MADTAPQPSKRKRERDPEEAEAPSTEEKEARVGNGTS) form a disordered region. Ala-2 is modified (N-acetylalanine). The short motif at 10-13 (KRKR) is the nuclear localization signal (NLS) element. Phosphoserine occurs at positions 24 and 101. Residues Lys-138 and Lys-142 each carry the N6-acetyllysine modification. Residues 142-154 (KYLHQDLHLVRET) carry the nuclear export sequence (NES) motif. Substrate contacts are provided by residues Trp-175, Glu-185, Asp-205, Lys-207, and 268–279 (HYLPSYYHLHVH). Positions 275–279 (HLHVH) match the Histidine triad motif motif. The Nucleophile role is filled by His-277.

Belongs to the HIT family. As to quaternary structure, homodimer. Associates with components of the exosome multienzyme ribonuclease complex, such as EXOSC3 and EXOSC4. Interacts with NDOR1.

The protein resides in the cytoplasm. It localises to the nucleus. It catalyses the reaction a 5'-end (N(7)-methyl 5'-triphosphoguanosine)-ribonucleoside in mRNA + H2O = N(7)-methyl-GMP + a 5'-end diphospho-ribonucleoside in mRNA + 2 H(+). The hydrolytic product 7-methylguanosine diphosphate (m7GDP) efficiently inhibits the decapping scavenger activity and acts as a competitive inhibitor in vitro. Inhibited by 2,4-diaminoquinazoline. In terms of biological role, decapping scavenger enzyme that catalyzes the cleavage of a residual cap structure following the degradation of mRNAs by the 3'-&gt;5' exosome-mediated mRNA decay pathway. Hydrolyzes cap analog structures like 7-methylguanosine nucleoside triphosphate (m7GpppG) with up to 10 nucleotide substrates (small capped oligoribonucleotides) and specifically releases 5'-phosphorylated RNA fragments and 7-methylguanosine monophosphate (m7GMP). Cleaves cap analog structures like tri-methyl guanosine nucleoside triphosphate (m3(2,2,7)GpppG) with very poor efficiency. Does not hydrolyze unmethylated cap analog (GpppG) and shows no decapping activity on intact m7GpppG-capped mRNA molecules longer than 25 nucleotides. Does not hydrolyze 7-methylguanosine diphosphate (m7GDP) to m7GMP. May also play a role in the 5'-&gt;3 mRNA decay pathway; m7GDP, the downstream product released by the 5'-&gt;3' mRNA mediated decapping activity, may be also converted by DCPS to m7GMP. Binds to m7GpppG and strongly to m7GDP. Plays a role in first intron splicing of pre-mRNAs. Inhibits activation-induced cell death. This Sus scrofa (Pig) protein is m7GpppX diphosphatase (DCPS).